Reading from the N-terminus, the 305-residue chain is 4-diphosphocytidyl-2-C-methyl-D-erythritol kinase (305 aa).

Lys17 is a catalytic residue. Pro111–Ala121 contributes to the ATP binding site. Residue Asp154 is part of the active site.

The protein belongs to the GHMP kinase family. IspE subfamily.

It catalyses the reaction 4-CDP-2-C-methyl-D-erythritol + ATP = 4-CDP-2-C-methyl-D-erythritol 2-phosphate + ADP + H(+). Its pathway is isoprenoid biosynthesis; isopentenyl diphosphate biosynthesis via DXP pathway; isopentenyl diphosphate from 1-deoxy-D-xylulose 5-phosphate: step 3/6. In terms of biological role, catalyzes the phosphorylation of the position 2 hydroxy group of 4-diphosphocytidyl-2C-methyl-D-erythritol. The chain is 4-diphosphocytidyl-2-C-methyl-D-erythritol kinase from Gluconacetobacter diazotrophicus (strain ATCC 49037 / DSM 5601 / CCUG 37298 / CIP 103539 / LMG 7603 / PAl5).